The sequence spans 210 residues: Pyridoxine/pyridoxamine 5'-phosphate oxidase (210 aa).

Residues 7–10 and lysine 65 contribute to the substrate site; that span reads REDY. FMN contacts are provided by residues 60–65, 75–76, arginine 81, lysine 82, and glutamine 104; these read RMVLLK and FT. Substrate is bound by residues tyrosine 122, arginine 126, and serine 130. Residues 139–140 and tryptophan 183 contribute to the FMN site; that span reads QS. Residue 189-191 participates in substrate binding; that stretch reads RLH. Arginine 193 is an FMN binding site.

Belongs to the pyridoxamine 5'-phosphate oxidase family. Homodimer. The cofactor is FMN.

The catalysed reaction is pyridoxamine 5'-phosphate + O2 + H2O = pyridoxal 5'-phosphate + H2O2 + NH4(+). The enzyme catalyses pyridoxine 5'-phosphate + O2 = pyridoxal 5'-phosphate + H2O2. It participates in cofactor metabolism; pyridoxal 5'-phosphate salvage; pyridoxal 5'-phosphate from pyridoxamine 5'-phosphate: step 1/1. Its pathway is cofactor metabolism; pyridoxal 5'-phosphate salvage; pyridoxal 5'-phosphate from pyridoxine 5'-phosphate: step 1/1. Catalyzes the oxidation of either pyridoxine 5'-phosphate (PNP) or pyridoxamine 5'-phosphate (PMP) into pyridoxal 5'-phosphate (PLP). This is Pyridoxine/pyridoxamine 5'-phosphate oxidase from Neisseria meningitidis serogroup B (strain ATCC BAA-335 / MC58).